Consider the following 591-residue polypeptide: UvrABC system protein C (591 aa).

One can recognise a GIY-YIG domain in the interval 14-91 (DQPGCYLMKD…IKKHDPKYNV (78 aa)). Residues 196–231 (KEVKVELEKKMHKAAEELNFERAKELRDTLGYMEAV) form the UVR domain.

Belongs to the UvrC family. Interacts with UvrB in an incision complex.

The protein localises to the cytoplasm. The UvrABC repair system catalyzes the recognition and processing of DNA lesions. UvrC both incises the 5' and 3' sides of the lesion. The N-terminal half is responsible for the 3' incision and the C-terminal half is responsible for the 5' incision. This chain is UvrABC system protein C, found in Halalkalibacterium halodurans (strain ATCC BAA-125 / DSM 18197 / FERM 7344 / JCM 9153 / C-125) (Bacillus halodurans).